We begin with the raw amino-acid sequence, 306 residues long: Plant-type L-asparaginase (306 aa).

The Nucleophile role is filled by T176. Substrate is bound by residues 203–206 (RVGD) and 225–228 (TGLG).

This sequence belongs to the Ntn-hydrolase family. Heterotetramer of two alpha and two beta chains arranged as a dimer of alpha/beta heterodimers. The uncleaved protein forms homodimers. In terms of processing, autocleaved. Generates the alpha and beta subunits. The N-terminal residue of the beta subunit is thought to be responsible for the nucleophile hydrolase activity. Predominantly produced in the uncleaved form when gene expression is induced at 37 degrees Celsius with 0.5 mM IPTG. When produced at 42 degrees Celsius without adding IPTG, approximately 90% of the protein is found in the cleaved form, while the remaining 10% is observed as uncleaved precursor. Undergoes complete auto-cleavage within 24 hours at 37 degrees Celsius.

It catalyses the reaction L-asparagine + H2O = L-aspartate + NH4(+). Undergoes auto-cleavage in a temperature-dependent and glycine-independent manner. Metal ions and EDTA do not have any significant effect on enzyme activity, indicating that activity is metal-independent. Its function is as follows. Catalyzes the hydrolysis of L-asparagine into L-aspartate and ammonia. Also displays D-asparaginase activity, which is about 10% of the L-asparaginase activity. Does not exhibit glutaminase activity. The sequence is that of Plant-type L-asparaginase from Thermococcus kodakarensis (strain ATCC BAA-918 / JCM 12380 / KOD1) (Pyrococcus kodakaraensis (strain KOD1)).